Consider the following 460-residue polypeptide: Bifunctional protein GlmU (460 aa).

The pyrophosphorylase stretch occupies residues 1–232 (MALNVVILAA…AIEVEGANNR (232 aa)). Residues 8 to 11 (LAAG), lysine 22, glutamine 73, 78 to 79 (GT), 100 to 102 (YGD), glycine 137, glutamate 157, asparagine 172, and asparagine 230 contribute to the UDP-N-acetyl-alpha-D-glucosamine site. Residue aspartate 102 coordinates Mg(2+). Asparagine 230 serves as a coordination point for Mg(2+). Residues 233-253 (VQLAQLERAYQAREAEKLMLA) are linker. The segment at 254-460 (GANLRDPSRI…GWQRPVKIKK (207 aa)) is N-acetyltransferase. Residues arginine 336 and lysine 354 each contribute to the UDP-N-acetyl-alpha-D-glucosamine site. Histidine 366 serves as the catalytic Proton acceptor. The UDP-N-acetyl-alpha-D-glucosamine site is built by tyrosine 369 and asparagine 380. Acetyl-CoA contacts are provided by residues alanine 383, 389–390 (NY), serine 408, alanine 426, and arginine 443.

The protein in the N-terminal section; belongs to the N-acetylglucosamine-1-phosphate uridyltransferase family. It in the C-terminal section; belongs to the transferase hexapeptide repeat family. As to quaternary structure, homotrimer. The cofactor is Mg(2+).

Its subcellular location is the cytoplasm. The catalysed reaction is alpha-D-glucosamine 1-phosphate + acetyl-CoA = N-acetyl-alpha-D-glucosamine 1-phosphate + CoA + H(+). It carries out the reaction N-acetyl-alpha-D-glucosamine 1-phosphate + UTP + H(+) = UDP-N-acetyl-alpha-D-glucosamine + diphosphate. It participates in nucleotide-sugar biosynthesis; UDP-N-acetyl-alpha-D-glucosamine biosynthesis; N-acetyl-alpha-D-glucosamine 1-phosphate from alpha-D-glucosamine 6-phosphate (route II): step 2/2. It functions in the pathway nucleotide-sugar biosynthesis; UDP-N-acetyl-alpha-D-glucosamine biosynthesis; UDP-N-acetyl-alpha-D-glucosamine from N-acetyl-alpha-D-glucosamine 1-phosphate: step 1/1. Its pathway is bacterial outer membrane biogenesis; LPS lipid A biosynthesis. Its function is as follows. Catalyzes the last two sequential reactions in the de novo biosynthetic pathway for UDP-N-acetylglucosamine (UDP-GlcNAc). The C-terminal domain catalyzes the transfer of acetyl group from acetyl coenzyme A to glucosamine-1-phosphate (GlcN-1-P) to produce N-acetylglucosamine-1-phosphate (GlcNAc-1-P), which is converted into UDP-GlcNAc by the transfer of uridine 5-monophosphate (from uridine 5-triphosphate), a reaction catalyzed by the N-terminal domain. The sequence is that of Bifunctional protein GlmU from Shewanella baltica (strain OS155 / ATCC BAA-1091).